The following is a 414-amino-acid chain: Ena/VASP-like protein (414 aa).

Positions 1-112 (MSEQSICQAR…NAMLFALNIM (112 aa)) constitute a WH1 domain. Phosphoserine is present on Ser130. Residues 157 to 369 (ATGPILPPGH…SRVKPAGSVN (213 aa)) form a disordered region. Positions 179-204 (GPPPPPPPPVPPPPTGSTPPPPPPLP) are enriched in pro residues. A compositionally biased stretch (low complexity) spans 217-228 (SASGLAAALAGA). Residues 220–240 (GLAAALAGAKLRRVQRPEDAS) are EVH2 block A. Positions 220–411 (GLAAALAGAK…DAIRQELSGI (192 aa)) are EVH2. The KLKR signature appears at 229–232 (KLRR). Positions 240–251 (SGGSSPSGTSKS) are enriched in low complexity. Phosphoserine occurs at positions 244 and 257. Residues 263–280 (GGLMEEMNKLLAKRRKAA) are EVH2 block B. Residues 297 to 318 (EDPSTSPSPGTRATSQPPNSSE) show a composition bias toward polar residues. Phosphoserine occurs at positions 302, 304, 327, 329, 339, 347, 352, and 367. A compositionally biased stretch (basic and acidic residues) spans 319 to 329 (AGRKPWERSNS). The required for interaction with ZDHHC17 stretch occupies residues 340-360 (RTPSVAKSPEAKSPLQSQPHS). The interval 377–411 (DLDRMKQEILEEVVRELHKVKEEIIDAIRQELSGI) is EVH2 block C.

This sequence belongs to the Ena/VASP family. Homotetramer. Binds to the SH3 domains of ABL1, LYN and SRC. Also binds to profilin, with preference for isoform IIa of PFN2, and the WW domain of APBB1/FE65. Binds to SEMA6A. Interacts, via the Pro-rich region, with the C-terminal SH3 domain of DNMBP. Interacts with RAPH1. Binds, via the EVH1 domain, the Pro-rich domain of Listeria monocytogenes actA. Binds, via the EVH1 domain, the Pro-rich domain of ZYX. Interacts with FYB1. Interacts with ZDHHC17. In terms of processing, phosphorylated by PKA; phosphorylation abolishes binding to SH3 domains of ABL and SRC. As to expression, highest expression in thymus and spleen (at protein level). Low levels in placenta, ovary, testis, fat and lung (at protein level). Isoform 1 and isoform 2 are expressed in cortical neurons and glial cells.

The protein localises to the cytoplasm. It is found in the cytoskeleton. Its subcellular location is the stress fiber. The protein resides in the cell projection. It localises to the lamellipodium. Functionally, ena/VASP proteins are actin-associated proteins involved in a range of processes dependent on cytoskeleton remodeling and cell polarity such as axon guidance and lamellipodial and filopodial dynamics in migrating cells. EVL enhances actin nucleation and polymerization. The sequence is that of Ena/VASP-like protein (Evl) from Mus musculus (Mouse).